The primary structure comprises 180 residues: Crossover junction endodeoxyribonuclease RuvC (180 aa).

Residues Asp-7, Glu-66, and Asp-138 contribute to the active site. 3 residues coordinate Mg(2+): Asp-7, Glu-66, and Asp-138.

This sequence belongs to the RuvC family. Homodimer which binds Holliday junction (HJ) DNA. The HJ becomes 2-fold symmetrical on binding to RuvC with unstacked arms; it has a different conformation from HJ DNA in complex with RuvA. In the full resolvosome a probable DNA-RuvA(4)-RuvB(12)-RuvC(2) complex forms which resolves the HJ. Mg(2+) serves as cofactor.

Its subcellular location is the cytoplasm. The catalysed reaction is Endonucleolytic cleavage at a junction such as a reciprocal single-stranded crossover between two homologous DNA duplexes (Holliday junction).. The RuvA-RuvB-RuvC complex processes Holliday junction (HJ) DNA during genetic recombination and DNA repair. Endonuclease that resolves HJ intermediates. Cleaves cruciform DNA by making single-stranded nicks across the HJ at symmetrical positions within the homologous arms, yielding a 5'-phosphate and a 3'-hydroxyl group; requires a central core of homology in the junction. The consensus cleavage sequence is 5'-(A/T)TT(C/G)-3'. Cleavage occurs on the 3'-side of the TT dinucleotide at the point of strand exchange. HJ branch migration catalyzed by RuvA-RuvB allows RuvC to scan DNA until it finds its consensus sequence, where it cleaves and resolves the cruciform DNA. The chain is Crossover junction endodeoxyribonuclease RuvC from Paraburkholderia xenovorans (strain LB400).